A 163-amino-acid chain; its full sequence is Cyclic pyranopterin monophosphate synthase (163 aa).

Residues 78–80 (LCH) and 116–117 (ME) each bind substrate. Residue Asp131 is part of the active site.

Belongs to the MoaC family. In terms of assembly, homohexamer; trimer of dimers.

It catalyses the reaction (8S)-3',8-cyclo-7,8-dihydroguanosine 5'-triphosphate = cyclic pyranopterin phosphate + diphosphate. The protein operates within cofactor biosynthesis; molybdopterin biosynthesis. Functionally, catalyzes the conversion of (8S)-3',8-cyclo-7,8-dihydroguanosine 5'-triphosphate to cyclic pyranopterin monophosphate (cPMP). The chain is Cyclic pyranopterin monophosphate synthase from Agrobacterium fabrum (strain C58 / ATCC 33970) (Agrobacterium tumefaciens (strain C58)).